Reading from the N-terminus, the 103-residue chain is MRLRKGDTVQVIAGKDKGKTGEVLRTLPNENRVIVEGLNMRTRHVKPTQEGETGRIVTEEASLHASNVMFYSTAKKVASRIELITEKDGSKKRRLKKTGEVID.

The protein belongs to the universal ribosomal protein uL24 family. As to quaternary structure, part of the 50S ribosomal subunit.

Its function is as follows. One of two assembly initiator proteins, it binds directly to the 5'-end of the 23S rRNA, where it nucleates assembly of the 50S subunit. Functionally, one of the proteins that surrounds the polypeptide exit tunnel on the outside of the subunit. The sequence is that of Large ribosomal subunit protein uL24 from Synechococcus sp. (strain CC9311).